Here is a 132-residue protein sequence, read N- to C-terminus: Fatty acid-binding protein 12 (132 aa).

A fatty acid contacts are provided by residues Arg107 and Arg127 to Tyr129.

The protein belongs to the calycin superfamily. Fatty-acid binding protein (FABP) family. In terms of tissue distribution, highly expressed in adult retina and testis with lower levels in cerebral cortex, kidney and epididymis. In the retina, strongly expressed in the ganglion cell layer and throughout the inner nuclear layer in amacrine and bipolar cells. Not expressed in the outer nuclear layer. In the testis, detected in the seminiferous tubules.

Its function is as follows. May play a role in lipid transport. This chain is Fatty acid-binding protein 12, found in Rattus norvegicus (Rat).